Reading from the N-terminus, the 262-residue chain is Phosphoribosyl 1,2-cyclic phosphate 1,2-diphosphodiesterase (262 aa).

Residues H6, H8, D13, H38, E63, H76, H193, D245, and H247 each coordinate Mn(2+).

It belongs to the PHP family. It depends on Mn(2+) as a cofactor.

The enzyme catalyses alpha-D-ribose 1,2-cyclic phosphate 5-phosphate + H2O = D-ribose 2,5-bisphosphate + H(+). It catalyses the reaction D-ribose 2,5-bisphosphate + H2O = D-ribose 5-phosphate + phosphate. In terms of biological role, involved in degradation of methylphosphonate. Catalyzes the hydrolysis of the phosphate ester at carbon-1 of 5-phospho-D-ribose 1,2-cyclic phosphate to form ribose 2,5-bisphosphate. This intermediate is then hydrolyzed to ribose-5-phosphate and inorganic phosphate. The chain is Phosphoribosyl 1,2-cyclic phosphate 1,2-diphosphodiesterase from Eggerthella lenta (strain ATCC 25559 / DSM 2243 / CCUG 17323 / JCM 9979 / KCTC 3265 / NCTC 11813 / VPI 0255 / 1899 B) (Eubacterium lentum).